Here is a 183-residue protein sequence, read N- to C-terminus: Gene BABR protein 2 (183 aa).

The polypeptide is Gene BABR protein 2 (Babesia bovis).